The following is a 232-amino-acid chain: Orotate phosphoribosyltransferase (232 aa).

5-phospho-alpha-D-ribose 1-diphosphate-binding positions include R107, K108, K111, H113, and 133–141; that span reads EDLTTAGGS. Residue T137 participates in orotate binding.

The protein belongs to the purine/pyrimidine phosphoribosyltransferase family. PyrE subfamily. In terms of assembly, homodimer. It depends on Mg(2+) as a cofactor.

It carries out the reaction orotidine 5'-phosphate + diphosphate = orotate + 5-phospho-alpha-D-ribose 1-diphosphate. Its pathway is pyrimidine metabolism; UMP biosynthesis via de novo pathway; UMP from orotate: step 1/2. Its function is as follows. Catalyzes the transfer of a ribosyl phosphate group from 5-phosphoribose 1-diphosphate to orotate, leading to the formation of orotidine monophosphate (OMP). The protein is Orotate phosphoribosyltransferase of Agrobacterium fabrum (strain C58 / ATCC 33970) (Agrobacterium tumefaciens (strain C58)).